Consider the following 394-residue polypeptide: Chaperone protein DnaJ (394 aa).

Residues 4-68 (DYYEILGVSR…ELRARYDRFG (65 aa)) enclose the J domain. The CR-type zinc finger occupies 136-218 (GGEKQIRISH…CNGEGLAQTT (83 aa)). Cys149, Cys152, Cys166, Cys169, Cys192, Cys195, Cys206, and Cys209 together coordinate Zn(2+). CXXCXGXG motif repeat units follow at residues 149–156 (CPVCGGSG), 166–173 (CPTCGGAG), 192–199 (CPTCGGAG), and 206–213 (CYNCNGEG).

This sequence belongs to the DnaJ family. In terms of assembly, homodimer. It depends on Zn(2+) as a cofactor.

It localises to the cytoplasm. Functionally, participates actively in the response to hyperosmotic and heat shock by preventing the aggregation of stress-denatured proteins and by disaggregating proteins, also in an autonomous, DnaK-independent fashion. Unfolded proteins bind initially to DnaJ; upon interaction with the DnaJ-bound protein, DnaK hydrolyzes its bound ATP, resulting in the formation of a stable complex. GrpE releases ADP from DnaK; ATP binding to DnaK triggers the release of the substrate protein, thus completing the reaction cycle. Several rounds of ATP-dependent interactions between DnaJ, DnaK and GrpE are required for fully efficient folding. Also involved, together with DnaK and GrpE, in the DNA replication of plasmids through activation of initiation proteins. This is Chaperone protein DnaJ from Synechococcus sp. (strain JA-3-3Ab) (Cyanobacteria bacterium Yellowstone A-Prime).